The primary structure comprises 406 residues: Argininosuccinate synthase (406 aa).

ATP contacts are provided by residues 12-20 (AYSGGLDTS) and A39. L-citrulline-binding residues include Y90 and S95. Position 120 (G120) interacts with ATP. The L-aspartate site is built by T122, N126, and D127. An L-citrulline-binding site is contributed by N126. L-citrulline contacts are provided by R130, S179, S188, E264, and Y276.

Belongs to the argininosuccinate synthase family. Type 1 subfamily. Homotetramer.

Its subcellular location is the cytoplasm. The enzyme catalyses L-citrulline + L-aspartate + ATP = 2-(N(omega)-L-arginino)succinate + AMP + diphosphate + H(+). The protein operates within amino-acid biosynthesis; L-arginine biosynthesis; L-arginine from L-ornithine and carbamoyl phosphate: step 2/3. In Geotalea uraniireducens (strain Rf4) (Geobacter uraniireducens), this protein is Argininosuccinate synthase.